The primary structure comprises 222 residues: 7-cyano-7-deazaguanine synthase (222 aa).

11-21 (FSGGQDSTTCL) is a binding site for ATP. Zn(2+)-binding residues include C187, C195, C198, and C201.

The protein belongs to the QueC family. Requires Zn(2+) as cofactor.

The enzyme catalyses 7-carboxy-7-deazaguanine + NH4(+) + ATP = 7-cyano-7-deazaguanine + ADP + phosphate + H2O + H(+). It functions in the pathway purine metabolism; 7-cyano-7-deazaguanine biosynthesis. Its function is as follows. Catalyzes the ATP-dependent conversion of 7-carboxy-7-deazaguanine (CDG) to 7-cyano-7-deazaguanine (preQ(0)). This chain is 7-cyano-7-deazaguanine synthase, found in Actinobacillus pleuropneumoniae serotype 7 (strain AP76).